Here is a 212-residue protein sequence, read N- to C-terminus: Peptide methionine sulfoxide reductase MsrA (212 aa).

The active site involves Cys51.

It belongs to the MsrA Met sulfoxide reductase family.

The catalysed reaction is L-methionyl-[protein] + [thioredoxin]-disulfide + H2O = L-methionyl-(S)-S-oxide-[protein] + [thioredoxin]-dithiol. It carries out the reaction [thioredoxin]-disulfide + L-methionine + H2O = L-methionine (S)-S-oxide + [thioredoxin]-dithiol. Functionally, has an important function as a repair enzyme for proteins that have been inactivated by oxidation. Catalyzes the reversible oxidation-reduction of methionine sulfoxide in proteins to methionine. The sequence is that of Peptide methionine sulfoxide reductase MsrA from Vibrio parahaemolyticus serotype O3:K6 (strain RIMD 2210633).